A 480-amino-acid polypeptide reads, in one-letter code: NADH-quinone oxidoreductase subunit N (480 aa).

14 helical membrane-spanning segments follow: residues 12–32, 41–61, 80–100, 105–125, 130–150, 165–185, 204–224, 237–257, 275–295, 300–320, 326–346, 372–392, 406–428, and 450–470; these read LLIP…LGVF, LVQW…LFLV, FSKT…MPYL, LGKI…MMMV, LIAM…LAAF, FVLG…VYGF, IGLT…VSAA, APTP…IVLL, VIWM…LTQQ, LMAY…AAAS, ALLV…ATIL, GWSM…VGFF, LMIL…LRIV, and IARI…WLVF.

It belongs to the complex I subunit 2 family. NDH-1 is composed of 14 different subunits. Subunits NuoA, H, J, K, L, M, N constitute the membrane sector of the complex.

It localises to the cell inner membrane. The enzyme catalyses a quinone + NADH + 5 H(+)(in) = a quinol + NAD(+) + 4 H(+)(out). Functionally, NDH-1 shuttles electrons from NADH, via FMN and iron-sulfur (Fe-S) centers, to quinones in the respiratory chain. The immediate electron acceptor for the enzyme in this species is believed to be ubiquinone. Couples the redox reaction to proton translocation (for every two electrons transferred, four hydrogen ions are translocated across the cytoplasmic membrane), and thus conserves the redox energy in a proton gradient. In Maricaulis maris (strain MCS10) (Caulobacter maris), this protein is NADH-quinone oxidoreductase subunit N.